A 231-amino-acid chain; its full sequence is PIAGSMVLAAILLKLGGYGIIRMMQALPTTKTDMFLPFIVLALWGATLANLTCLQQTDLKSLIAYSSISHMGLVVATIIIQTPWGLSGAMALMIAHGFTSSALFCLANTTYERTHTRILILTRGFHNILPMATTWWLLANLMNIAIPPTMNFTGELLITSALFNWCPTTIIMLGLSMLITASYSLHMFLSTQMGPTPTNNQTEPTHSREHLLMVLHLTPLMMISLKPELII.

Helical transmembrane passes span P1 to I21, M34 to L54, L62 to W84, A89 to Y111, I128 to P148, and T169 to L189.

Belongs to the complex I subunit 4 family.

The protein localises to the mitochondrion membrane. It carries out the reaction a ubiquinone + NADH + 5 H(+)(in) = a ubiquinol + NAD(+) + 4 H(+)(out). Functionally, core subunit of the mitochondrial membrane respiratory chain NADH dehydrogenase (Complex I) that is believed to belong to the minimal assembly required for catalysis. Complex I functions in the transfer of electrons from NADH to the respiratory chain. The immediate electron acceptor for the enzyme is believed to be ubiquinone. The protein is NADH-ubiquinone oxidoreductase chain 4 (MT-ND4) of Bothrops erythromelas (Caatinga lance head).